Reading from the N-terminus, the 92-residue chain is Large ribosomal subunit protein bL25 (92 aa).

The protein belongs to the bacterial ribosomal protein bL25 family. As to quaternary structure, part of the 50S ribosomal subunit; part of the 5S rRNA/L5/L18/L25 subcomplex. Contacts the 5S rRNA. Binds to the 5S rRNA independently of L5 and L18.

Its function is as follows. This is one of the proteins that binds to the 5S RNA in the ribosome where it forms part of the central protuberance. In Vibrio cholerae serotype O1 (strain ATCC 39541 / Classical Ogawa 395 / O395), this protein is Large ribosomal subunit protein bL25.